The chain runs to 438 residues: tRNA(Ile)-lysidine synthase (438 aa).

19–24 (SGGIDS) lines the ATP pocket.

The protein belongs to the tRNA(Ile)-lysidine synthase family.

It is found in the cytoplasm. The enzyme catalyses cytidine(34) in tRNA(Ile2) + L-lysine + ATP = lysidine(34) in tRNA(Ile2) + AMP + diphosphate + H(+). Its function is as follows. Ligates lysine onto the cytidine present at position 34 of the AUA codon-specific tRNA(Ile) that contains the anticodon CAU, in an ATP-dependent manner. Cytidine is converted to lysidine, thus changing the amino acid specificity of the tRNA from methionine to isoleucine. The polypeptide is tRNA(Ile)-lysidine synthase (Buchnera aphidicola subsp. Baizongia pistaciae (strain Bp)).